A 1185-amino-acid chain; its full sequence is DNA-directed RNA polymerase subunit beta' (1185 aa).

Residues cysteine 60, cysteine 62, cysteine 75, and cysteine 78 each coordinate Zn(2+). Mg(2+)-binding residues include aspartate 449, aspartate 451, and aspartate 453. Positions 774, 853, 860, and 863 each coordinate Zn(2+).

Belongs to the RNA polymerase beta' chain family. The RNAP catalytic core consists of 2 alpha, 1 beta, 1 beta' and 1 omega subunit. When a sigma factor is associated with the core the holoenzyme is formed, which can initiate transcription. Mg(2+) serves as cofactor. Requires Zn(2+) as cofactor.

It catalyses the reaction RNA(n) + a ribonucleoside 5'-triphosphate = RNA(n+1) + diphosphate. Functionally, DNA-dependent RNA polymerase catalyzes the transcription of DNA into RNA using the four ribonucleoside triphosphates as substrates. The polypeptide is DNA-directed RNA polymerase subunit beta' (Desulforamulus reducens (strain ATCC BAA-1160 / DSM 100696 / MI-1) (Desulfotomaculum reducens)).